The following is a 607-amino-acid chain: Autophagy-related protein 22-2 (607 aa).

A disordered region spans residues phenylalanine 9–threonine 31. A helical transmembrane segment spans residues tyrosine 44–leucine 64. Asparagine 88 and asparagine 91 each carry an N-linked (GlcNAc...) asparagine glycan. The next 3 helical transmembrane spans lie at serine 111–phenylalanine 131, threonine 143–valine 160, and phenylalanine 161–valine 178. The segment at glutamine 203–serine 263 is disordered. N-linked (GlcNAc...) asparagine glycosylation occurs at asparagine 235. Transmembrane regions (helical) follow at residues glycine 277–leucine 297, threonine 310–valine 330, valine 381–threonine 401, proline 415–tryptophan 435, isoleucine 450–proline 470, tryptophan 484–cysteine 504, tyrosine 521–valine 543, and glycine 552–alanine 572. Residues threonine 585–glutamate 607 are disordered.

Belongs to the ATG22 family.

Its subcellular location is the vacuole membrane. Vacuolar effluxer which mediate the efflux of amino acids resulting from autophagic degradation. The release of autophagic amino acids allows the maintenance of protein synthesis and viability during nitrogen starvation. The chain is Autophagy-related protein 22-2 (atg22-2) from Penicillium rubens (strain ATCC 28089 / DSM 1075 / NRRL 1951 / Wisconsin 54-1255) (Penicillium chrysogenum).